Reading from the N-terminus, the 341-residue chain is N-acetyl-gamma-glutamyl-phosphate reductase (341 aa).

Cys-149 is an active-site residue.

Belongs to the NAGSA dehydrogenase family. Type 1 subfamily.

It is found in the cytoplasm. The enzyme catalyses N-acetyl-L-glutamate 5-semialdehyde + phosphate + NADP(+) = N-acetyl-L-glutamyl 5-phosphate + NADPH + H(+). The protein operates within amino-acid biosynthesis; L-arginine biosynthesis; N(2)-acetyl-L-ornithine from L-glutamate: step 3/4. Catalyzes the NADPH-dependent reduction of N-acetyl-5-glutamyl phosphate to yield N-acetyl-L-glutamate 5-semialdehyde. The polypeptide is N-acetyl-gamma-glutamyl-phosphate reductase (Methanocaldococcus jannaschii (strain ATCC 43067 / DSM 2661 / JAL-1 / JCM 10045 / NBRC 100440) (Methanococcus jannaschii)).